Reading from the N-terminus, the 405-residue chain is MTIANTPAELLASSISTLASRYAEKVQAGENADTEIASIVSACKDLDALVTPPESWNDRMAMSYTISTAIALLLNWDVFQILAAQAKPTSLETLATSCGCSKSLLRCALREAVAHRMLDELSPETYALNSRSSCLLDENKAAWIHYLTDIGLVTAAYLPKYVKSINGKIPEHSHRIALQMAFNVDETFYEFLHRKDPKRGVNFDKAMQRHIKGDAQASIESVFDFSILRPGAVVVDVGGGKGHHCIRIAKKHPHLSFIIQDYEANGPSDGEDTLPEALARRVRWQRHNFHHKQPMDGADVYLLSNILMDNTVSDCNRILTNIVDAMVPNHSVLLVDDAIDTLSEDSHSAYSSSMNLHMLSCFGTLFRTQEDWLMLFSEVAGGKLSIVSSWMIDAGRMIFALRRKF.

S-adenosyl-L-methionine is bound by residues 238 to 239, Asp261, and 290 to 291; these read GG and HH.

Belongs to the class I-like SAM-binding methyltransferase superfamily. Cation-independent O-methyltransferase family.

The protein operates within secondary metabolite biosynthesis. In terms of biological role, N-methyltransferase; part of the gene cluster that mediates the biosynthesis of the benzazepine alkaloid nanangelenin A which contains an unprecedented 3,4-dihydro-1-benzazepine-2,5-dione-N-prenyl-N-acetoxy-anthranilamide scaffold. The first step of nanangelenin biosynthesis is catalyzed by the indoleamine 2,3-dioxygenase nanC which produces N-formyl-kynurenine through the catabolism of tryptophan. The two-module NRPS nanA then utilizes anthranilate (Ant) and L-kynurenine (L-Kyn) to assemble the dipeptide product nanangelenin B. The first adenylation domain of nanA (A1) loads anthranilate onto the T1 domain, while A2 loads kynurenine, generated through spontaneous nonenzymatic deformylation of the nanC-supplied N-formyl-kynurenine. The peptide bond formation between the tethered amino acids is catalyzed by the first condensation domain (C1) between anthranilate's carbonyl carbon and kynurenine's aliphatic primary amine. The second C domain (C2) catalyzes the final cyclization event between the aromatic amine of kynurenine and the tethered carbonyl carbon, yielding nanangelenin B. The terminal T3 domain enhances the catalytic efficiency of C2, suggesting the T2-tethered Ant-L-Kyn is transferred to T3 prior to cyclization by C2. Once released from nanA, nanangelenin B is then prenylated by the prenyltransferase nanD to form nanangelenin C. Nanangelenin C is then N-hydroxylated by the FAD-dependent monooxygenase nanF and further acetylated by the acetyltransferase nanB to yield nanangelenin F. Finally, the N-methyltransferase nanE methylates the amide nitrogen of 1-benzazepine to convert nanangelenin F into nanangelenin A. NanE is also able to methylate most of the intermediates of the pathway such as nanangelenin B and nanangelenin C to produce nanangelenin D and nanangelenin E, respectively. This chain is N-methyltransferase nanE, found in Aspergillus nanangensis.